The primary structure comprises 726 residues: Pre-mRNA-splicing factor CLF1 (726 aa).

HAT repeat units lie at residues 55–87 (EFQA…WEAS), 89–121 (NEYE…MELK), 123–155 (RNIN…LEEL), 157–188 (LNVS…LEER), 190–221 (NELD…FEED), 223–262 (GQPD…METR), 264–298 (KEFE…FEKQ), 308–340 (TVLG…LEED), 352–386 (VEPM…LWLQ), 396–432 (KDYD…FEIR), 434–465 (LDVS…LEMR), 467–499 (REFD…VESA), 501–534 (EDFE…FEAG), 536–567 (GERE…MEIA), 585–626 (GDAD…EHGD), and 635–667 (DMLP…DDER). The segment at 682 to 726 (AWAQQRAGQGEEGGLSYDLPSDSEDENEDGDEDGDGREEEGMDQD) is disordered. The span at 702 to 726 (SDSEDENEDGDEDGDGREEEGMDQD) shows a compositional bias: acidic residues.

Belongs to the crooked-neck family. As to quaternary structure, associated with the spliceosome.

Its subcellular location is the nucleus. Its function is as follows. Involved in pre-mRNA splicing and cell cycle progression. Required for the spliceosome assembly and initiation of the DNA replication. The protein is Pre-mRNA-splicing factor CLF1 (CLF1) of Cryptococcus neoformans var. neoformans serotype D (strain B-3501A) (Filobasidiella neoformans).